Here is a 404-residue protein sequence, read N- to C-terminus: CCA-adding enzyme (404 aa).

ATP is bound by residues G27 and R30. Positions 27 and 30 each coordinate CTP. Mg(2+) contacts are provided by D40 and D42. Residues R111, D154, R157, R160, and R163 each contribute to the ATP site. R111, D154, R157, R160, and R163 together coordinate CTP.

The protein belongs to the tRNA nucleotidyltransferase/poly(A) polymerase family. Bacterial CCA-adding enzyme type 3 subfamily. Homodimer. It depends on Mg(2+) as a cofactor.

It catalyses the reaction a tRNA precursor + 2 CTP + ATP = a tRNA with a 3' CCA end + 3 diphosphate. It carries out the reaction a tRNA with a 3' CCA end + 2 CTP + ATP = a tRNA with a 3' CCACCA end + 3 diphosphate. Its function is as follows. Catalyzes the addition and repair of the essential 3'-terminal CCA sequence in tRNAs without using a nucleic acid template. Adds these three nucleotides in the order of C, C, and A to the tRNA nucleotide-73, using CTP and ATP as substrates and producing inorganic pyrophosphate. tRNA 3'-terminal CCA addition is required both for tRNA processing and repair. Also involved in tRNA surveillance by mediating tandem CCA addition to generate a CCACCA at the 3' terminus of unstable tRNAs. While stable tRNAs receive only 3'-terminal CCA, unstable tRNAs are marked with CCACCA and rapidly degraded. In Geobacillus thermodenitrificans (strain NG80-2), this protein is CCA-adding enzyme.